A 307-amino-acid polypeptide reads, in one-letter code: Branched-chain-amino-acid aminotransferase (307 aa).

The residue at position 160 (Lys160) is an N6-(pyridoxal phosphate)lysine.

This sequence belongs to the class-IV pyridoxal-phosphate-dependent aminotransferase family. It depends on pyridoxal 5'-phosphate as a cofactor.

It carries out the reaction L-leucine + 2-oxoglutarate = 4-methyl-2-oxopentanoate + L-glutamate. The enzyme catalyses L-isoleucine + 2-oxoglutarate = (S)-3-methyl-2-oxopentanoate + L-glutamate. The catalysed reaction is L-valine + 2-oxoglutarate = 3-methyl-2-oxobutanoate + L-glutamate. It functions in the pathway amino-acid biosynthesis; L-isoleucine biosynthesis; L-isoleucine from 2-oxobutanoate: step 4/4. The protein operates within amino-acid biosynthesis; L-leucine biosynthesis; L-leucine from 3-methyl-2-oxobutanoate: step 4/4. It participates in amino-acid biosynthesis; L-valine biosynthesis; L-valine from pyruvate: step 4/4. Functionally, acts on leucine, isoleucine and valine. This is Branched-chain-amino-acid aminotransferase (ilvE) from Pseudomonas aeruginosa (strain ATCC 15692 / DSM 22644 / CIP 104116 / JCM 14847 / LMG 12228 / 1C / PRS 101 / PAO1).